The sequence spans 687 residues: Phenylalanine aminomutase (L-beta-phenylalanine forming) (687 aa).

Tyr80 acts as the Proton donor/acceptor in catalysis. A cross-link (5-imidazolinone (Ala-Gly)) is located at residues Ala175–Gly177. At Ser176 the chain carries 2,3-didehydroalanine (Ser). Asn231, Gln319, Arg325, Asn355, Lys427, Glu455, and Asn458 together coordinate (E)-cinnamate.

This sequence belongs to the PAL/histidase family. Homodimer. Homotetramer, dimer of dimers. Contains an active site 4-methylidene-imidazol-5-one (MIO), which is formed autocatalytically by cyclization and dehydration of residues Ala-Ser-Gly.

It localises to the cytoplasm. It catalyses the reaction L-phenylalanine = L-beta-phenylalanine. It carries out the reaction L-phenylalanine = (E)-cinnamate + NH4(+). The protein operates within alkaloid biosynthesis; taxol biosynthesis. Its pathway is phenylpropanoid metabolism; trans-cinnamate biosynthesis; trans-cinnamate from L-phenylalanine: step 1/1. Phenylalanine aminomutase that catalyzes the rearrangement of L-phenylalanine to R-beta-phenylalanine. Catalyzes the first committed step in the biosynthesis of the side chain of the alkaloid taxol (paclitaxel), a widely-used compound with antitumor activity. Also has low phenylalanine ammonia-lyase activity and can catalyze the amination of trans-cinnamate. This is Phenylalanine aminomutase (L-beta-phenylalanine forming) (pam) from Taxus chinensis (Chinese yew).